The sequence spans 217 residues: Redox-sensing transcriptional repressor Rex (217 aa).

The H-T-H motif DNA-binding region spans 18–57 (LYYRFLKNLHASGKQRVSSAELSDAVKVDSATIRRDFSYF). 92–97 (GVGNLG) is a binding site for NAD(+).

This sequence belongs to the transcriptional regulatory Rex family. Homodimer.

It localises to the cytoplasm. In terms of biological role, modulates transcription in response to changes in cellular NADH/NAD(+) redox state. This Bacillus pumilus (strain SAFR-032) protein is Redox-sensing transcriptional repressor Rex.